The chain runs to 394 residues: Short-chain dehydrogenase/reductase family 42E member 1 (394 aa).

Tyrosine 153 serves as the catalytic Proton acceptor. NAD(+) is bound at residue lysine 157. The next 2 membrane-spanning stretches (helical) occupy residues 283 to 303 (LPLTLIYCLAFLVEMTHFIVG) and 367 to 387 (FMLWDGILILLLALSVLTWIL).

It belongs to the 3-beta-HSD family.

The protein resides in the membrane. The chain is Short-chain dehydrogenase/reductase family 42E member 1 (Sdr42e1) from Mus musculus (Mouse).